Consider the following 285-residue polypeptide: Probable endonuclease 4 (285 aa).

Positions 69, 109, 145, 179, 182, 216, 229, 231, and 261 each coordinate Zn(2+).

This sequence belongs to the AP endonuclease 2 family. Requires Zn(2+) as cofactor.

The catalysed reaction is Endonucleolytic cleavage to 5'-phosphooligonucleotide end-products.. Functionally, endonuclease IV plays a role in DNA repair. It cleaves phosphodiester bonds at apurinic or apyrimidinic (AP) sites, generating a 3'-hydroxyl group and a 5'-terminal sugar phosphate. The sequence is that of Probable endonuclease 4 from Salmonella typhimurium (strain LT2 / SGSC1412 / ATCC 700720).